Here is a 1165-residue protein sequence, read N- to C-terminus: MPGITETSQVTGPVLAHVIVTEDPYDASERAFLSTDLYELLFEDYANGSKSGLTLISIQLMGSSLFNEFQTFKVYESEEQLPPNTVNLCNMGNIIDYSSDFTVDSGYVARVDSLVKLDTVIISVLPEVYSLASQSQHQLVDILGGNDQHTVIRQGDYNKDINGKISLCEPTDQGFLESTTKIIVVKENSLNLPLLDQSQDGSLNYEENVKMNLEHSISNYFSLNSLDPENQITTTGVEFSVKCLDSPISVRKTAKSISVAHDSEDESSPKLVEEDISNEDTLLYAFCKTTELAKIGCLSGDIVKMKSGQCQCTTFECNCESCPVQYRYIRIHAFTDPNTYEKGCIYLNPILSFNLNNPKIVKLCPISIPDKRFELQGFHFSKFIPLAKQVTIARVSSPVTLDRTLQTLFLTNLKTYFESGRKVLSKDQLIPIPVDTLLAKSIFSTYEKLGVDDSQFPTVIPEGKPDAIAWFKVTEVSGELADSASQQFIIDPLKTKMMQSGVVSCSPPKNSQHCNWANYLGCGQMFSFPNVSGVTTSTFEYAKTLRKLIKATIDPSRLVNLQTTVLLSSLSRAIGKSLLVHSLALECGVHLVEIDGYEVLNPSSESKTIGTIRGKLDRVVEGCTPLIVFIKHIEALTKKSEQQQKDSLAVKINELIDEYTAKPGVLFVASTNDSDNLSDELRAKFKFEIVLGVPSEQERTLIFKYLIDFDQKTTPKVTEGTRELSFAPRNDLSLSSLSLQSAGLTPRDLISIVENAKTLAVDRVESLAKHHNVSFENMVYSSGGYIKFTPEDVEKSINTARNKFSDSIGAPRIPNVKWEDVGGLDVVKDEILDTIDMPMKHPELFSNGIKKRSGILFYGPPGTGKTLLAKAIATNFALNFFSVKGPELLNMYIGESEANVRKVFQRARDAKPCVVFFDELDSVAPKRGNQGDSEGVMDRIVSQLLAELDGMSGGDGGDGVFVVGATNRPDLLDEALLRPGRFDKMLYLGVSDTHEKQSKIMEALSRKFHLHPSVDLDKVAESCPFTFTGADFYALCSDAMLNAMTRIANTVDEKIKRYNEELPEKSQVSTRWWFDNVATKEDIDVLVTLEDFDKSRKELVPSVSAEELDHYLRVRQNFEGGKEKKVVQENGQTEHFSNGSANNHITFGDEQVVEAIDENGNSIIA.

This sequence belongs to the AAA ATPase family. In terms of assembly, interacts with PEX1; forming the PEX1-PEX6 AAA ATPase complex, which is composed of a heterohexamer formed by a trimer of PEX1-PEX6 dimers.

The protein resides in the membrane. It carries out the reaction ATP + H2O = ADP + phosphate + H(+). Functionally, component of the PEX1-PEX6 AAA ATPase complex involved in peroxisome biosynthesis. The complex acts as a protein dislocase complex that mediates the ATP-dependent extraction of the PEX5 receptor from peroxisomal membranes, an essential step for PEX5 recycling. Specifically recognizes PEX5 monoubiquitinated at 'Cys-6', and pulls it out of the peroxisome lumen through the PEX2-PEX10-PEX12 retrotranslocation channel. Extraction by the PEX1-PEX6 AAA ATPase complex is accompanied by unfolding of the TPR repeats and release of bound cargo from PEX5. This Komagataella pastoris (Yeast) protein is Peroxisomal ATPase PEX6.